We begin with the raw amino-acid sequence, 697 residues long: MMRPVVVKEKQLNESQIHAVEDEVRQAKTMDRDIVTHAMKQSVAKLNPKVMIKNPIMFVVEIGFIITFILSFLPSSSSSIPGWFNITVSLILLFTVLFANFAEALAEGRGKAQADSLKQSKKDVFANVVKENGDIVQVSATDLRKGDVVIVKQGEMIPSDGEVIKGLASVDESAITGESAPVIKEAGGDFCSVTGGTMVVSDEITIVITSNPGESFIDKMISLVEGAARQKTPNEIALNTVLTSLTLIFLIVVVTLPIFTNYLGFQIDTAVLVALLVCLIPTTIGGLLSAIGIAGMDRVTKFNVLAMSGKAVEAAGDINTIILDKTGTITFGNRMAHTLLPVGNETIEQVGKWAAISSVLDETPEGRSVIEYVQGKSISYNRELAEQGEFVPFKAETRMSGVDLQDGTKVRKGAVGAVIEWVESQGGTIPKDVNQKADLISKEGGTPLVVAVDNRIYGLIYLKDTVKPGMRDRFEQLRQMGIKTVMCTGDNPLTAATIAKEAGVDEFVAECKPEDKIAVIKAEQDKGKLVAMTGDGTNDAPALAQADVGLAMNSGTTAAKEAANMIDLDSNPTKIIEVVGIGKQLLMTRGALTTFSIANDIAKYFAIIPAMFTLAIPQMEALNIMKLTSPLSAILSALIFNAVIIPLLIPLAMKGIAYKPMSSNALLSRNLLIYGLGGVIVPFIGIKVIDMIVGLFI.

Transmembrane regions (helical) follow at residues 55–75, 79–99, 245–265, and 271–291; these read PIMFVVEIGFIITFILSFLPS, SIPGWFNITVSLILLFTVLFA, LTLIFLIVVVTLPIFTNYLGF, and VLVALLVCLIPTTIGGLLSAI. The active-site 4-aspartylphosphate intermediate is the D324. ATP-binding positions include D361, E365, 393-400, and K412; that span reads FKAETRMS. Mg(2+) is bound by residues D535 and D539. The next 3 helical transmembrane spans lie at 605 to 625, 633 to 653, and 677 to 697; these read FAIIPAMFTLAIPQMEALNIM, AILSALIFNAVIIPLLIPLAM, and GGVIVPFIGIKVIDMIVGLFI.

This sequence belongs to the cation transport ATPase (P-type) (TC 3.A.3) family. Type IA subfamily. The system is composed of three essential subunits: KdpA, KdpB and KdpC.

Its subcellular location is the cell membrane. It catalyses the reaction K(+)(out) + ATP + H2O = K(+)(in) + ADP + phosphate + H(+). Functionally, part of the high-affinity ATP-driven potassium transport (or Kdp) system, which catalyzes the hydrolysis of ATP coupled with the electrogenic transport of potassium into the cytoplasm. This subunit is responsible for energy coupling to the transport system and for the release of the potassium ions to the cytoplasm. The polypeptide is Potassium-transporting ATPase ATP-binding subunit (Bacillus cereus (strain B4264)).